The following is a 65-amino-acid chain: Large ribosomal subunit protein bL35 (65 aa).

The protein belongs to the bacterial ribosomal protein bL35 family.

This chain is Large ribosomal subunit protein bL35, found in Phytoplasma mali (strain AT).